Consider the following 81-residue polypeptide: Cytochrome b559 subunit alpha (81 aa).

A helical transmembrane segment spans residues 21 to 35 (VIHSITIPMLFIAGW). Heme is bound at residue H23.

The protein belongs to the PsbE/PsbF family. As to quaternary structure, heterodimer of an alpha subunit and a beta subunit. PSII is composed of 1 copy each of membrane proteins PsbA, PsbB, PsbC, PsbD, PsbE, PsbF, PsbH, PsbI, PsbJ, PsbK, PsbL, PsbM, PsbT, PsbX, PsbY, PsbZ, Psb30/Ycf12, peripheral proteins PsbO, CyanoQ (PsbQ), PsbU, PsbV and a large number of cofactors. It forms dimeric complexes. The cofactor is heme b.

It localises to the cellular thylakoid membrane. In terms of biological role, this b-type cytochrome is tightly associated with the reaction center of photosystem II (PSII). PSII is a light-driven water:plastoquinone oxidoreductase that uses light energy to abstract electrons from H(2)O, generating O(2) and a proton gradient subsequently used for ATP formation. It consists of a core antenna complex that captures photons, and an electron transfer chain that converts photonic excitation into a charge separation. In Rippkaea orientalis (strain PCC 8801 / RF-1) (Cyanothece sp. (strain PCC 8801)), this protein is Cytochrome b559 subunit alpha.